The chain runs to 579 residues: Transcription factor COE2 (579 aa).

The interaction with DNA stretch occupies residues R63–N66. Residues C149–C168 form a C5-type zinc finger. Interaction with DNA regions lie at residues N195–N202 and N234–K237. The region spanning P260–T343 is the IPT/TIG domain. Disordered stretches follow at residues G442–N482, A514–S533, and L549–M579. A compositionally biased stretch (polar residues) spans G449–N459. Low complexity-rich tracts occupy residues S460–S472 and P521–S533.

It belongs to the COE family.

Its subcellular location is the nucleus. The protein is Transcription factor COE2 (coe2) of Danio rerio (Zebrafish).